The following is a 312-amino-acid chain: Serine/threonine-protein phosphatase PP1 isozyme 2 (312 aa).

Ala2 is subject to N-acetylalanine. Mn(2+) is bound by residues Asp70, His72, Asp98, and Asn130. The active-site Proton donor is His131. Residues His179 and His254 each coordinate Mn(2+).

The protein belongs to the PPP phosphatase family. PP-1 subfamily. In terms of assembly, interacts with SRK2D/SNRK2.2 and SRK2E/SNRK2.6. It depends on Mn(2+) as a cofactor.

Its subcellular location is the nucleus. The protein localises to the cytoplasm. It catalyses the reaction O-phospho-L-seryl-[protein] + H2O = L-seryl-[protein] + phosphate. It carries out the reaction O-phospho-L-threonyl-[protein] + H2O = L-threonyl-[protein] + phosphate. With respect to regulation, phosphatase activity is strongly reduced by the protein phosphatase inhibitor 2 (I-2). Serine/threonine-protein phosphatase that possesses phosphatase activity toward para-nitrophenyl phosphate (pNPP) in vitro. This Arabidopsis thaliana (Mouse-ear cress) protein is Serine/threonine-protein phosphatase PP1 isozyme 2.